The sequence spans 143 residues: MKVEIYTDGACKGNPGPGGWGVLLRYNGREKTLHGGEPQTTNNRMELMAAIKGLEALKRPCEVDLYTDSQYLQQGMKEWIKTWKRNGWRNSKKELVKNAELWKSLDNLASIHNINWHWVKGHSGHLENDLVDALANLGIEELS.

The RNase H type-1 domain maps to 1–140; the sequence is MKVEIYTDGA…VDALANLGIE (140 aa). Residues aspartate 8, glutamate 46, aspartate 68, and aspartate 132 each coordinate Mg(2+).

Belongs to the RNase H family. Monomer. Mg(2+) is required as a cofactor.

Its subcellular location is the cytoplasm. It catalyses the reaction Endonucleolytic cleavage to 5'-phosphomonoester.. Endonuclease that specifically degrades the RNA of RNA-DNA hybrids. This Legionella pneumophila (strain Lens) protein is Ribonuclease H.